We begin with the raw amino-acid sequence, 156 residues long: Small ribosomal subunit protein uS7 (156 aa).

It belongs to the universal ribosomal protein uS7 family. Part of the 30S ribosomal subunit. Contacts proteins S9 and S11.

One of the primary rRNA binding proteins, it binds directly to 16S rRNA where it nucleates assembly of the head domain of the 30S subunit. Is located at the subunit interface close to the decoding center, probably blocks exit of the E-site tRNA. This is Small ribosomal subunit protein uS7 from Herminiimonas arsenicoxydans.